Consider the following 415-residue polypeptide: Serine hydroxymethyltransferase 1 (415 aa).

Residues Leu117 and Gly121–Leu123 contribute to the (6S)-5,6,7,8-tetrahydrofolate site. An N6-(pyridoxal phosphate)lysine modification is found at Lys225. Ser349–Phe351 lines the (6S)-5,6,7,8-tetrahydrofolate pocket.

This sequence belongs to the SHMT family. In terms of assembly, homodimer. It depends on pyridoxal 5'-phosphate as a cofactor.

Its subcellular location is the cytoplasm. The enzyme catalyses (6R)-5,10-methylene-5,6,7,8-tetrahydrofolate + glycine + H2O = (6S)-5,6,7,8-tetrahydrofolate + L-serine. It functions in the pathway one-carbon metabolism; tetrahydrofolate interconversion. Its pathway is amino-acid biosynthesis; glycine biosynthesis; glycine from L-serine: step 1/1. Functionally, catalyzes the reversible interconversion of serine and glycine with tetrahydrofolate (THF) serving as the one-carbon carrier. This reaction serves as the major source of one-carbon groups required for the biosynthesis of purines, thymidylate, methionine, and other important biomolecules. Also exhibits THF-independent aldolase activity toward beta-hydroxyamino acids, producing glycine and aldehydes, via a retro-aldol mechanism. The polypeptide is Serine hydroxymethyltransferase 1 (Sulfurimonas denitrificans (strain ATCC 33889 / DSM 1251) (Thiomicrospira denitrificans (strain ATCC 33889 / DSM 1251))).